A 206-amino-acid chain; its full sequence is LexA repressor (206 aa).

Residues 28–48 (RAEIATRLGFKSANAAEEHLK) constitute a DNA-binding region (H-T-H motif). Active-site for autocatalytic cleavage activity residues include S123 and K160.

This sequence belongs to the peptidase S24 family. In terms of assembly, homodimer.

It carries out the reaction Hydrolysis of Ala-|-Gly bond in repressor LexA.. Functionally, represses a number of genes involved in the response to DNA damage (SOS response), including recA and lexA. In the presence of single-stranded DNA, RecA interacts with LexA causing an autocatalytic cleavage which disrupts the DNA-binding part of LexA, leading to derepression of the SOS regulon and eventually DNA repair. The sequence is that of LexA repressor from Shewanella oneidensis (strain ATCC 700550 / JCM 31522 / CIP 106686 / LMG 19005 / NCIMB 14063 / MR-1).